The following is a 445-amino-acid chain: Trigger factor (445 aa).

Residues 168-253 enclose the PPIase FKBP-type domain; the sequence is GDAVIVDFVG…IHEVRAPQTP (86 aa).

Belongs to the FKBP-type PPIase family. Tig subfamily.

It is found in the cytoplasm. The catalysed reaction is [protein]-peptidylproline (omega=180) = [protein]-peptidylproline (omega=0). Functionally, involved in protein export. Acts as a chaperone by maintaining the newly synthesized protein in an open conformation. Functions as a peptidyl-prolyl cis-trans isomerase. This is Trigger factor from Hyphomonas neptunium (strain ATCC 15444).